A 396-amino-acid polypeptide reads, in one-letter code: 1-deoxy-D-xylulose 5-phosphate reductoisomerase (396 aa).

NADPH is bound by residues Thr13, Gly14, Ser15, Ile16, and Asn127. Position 128 (Lys128) interacts with 1-deoxy-D-xylulose 5-phosphate. NADPH is bound at residue Glu129. Asp153 is a binding site for Mn(2+). Positions 154, 155, 184, and 207 each coordinate 1-deoxy-D-xylulose 5-phosphate. Glu155 contributes to the Mn(2+) binding site. Gly213 lines the NADPH pocket. Residues Ser220, Asn225, Lys226, and Glu229 each coordinate 1-deoxy-D-xylulose 5-phosphate. Glu229 is a Mn(2+) binding site.

It belongs to the DXR family. Mg(2+) serves as cofactor. Mn(2+) is required as a cofactor.

The catalysed reaction is 2-C-methyl-D-erythritol 4-phosphate + NADP(+) = 1-deoxy-D-xylulose 5-phosphate + NADPH + H(+). Its pathway is isoprenoid biosynthesis; isopentenyl diphosphate biosynthesis via DXP pathway; isopentenyl diphosphate from 1-deoxy-D-xylulose 5-phosphate: step 1/6. In terms of biological role, catalyzes the NADPH-dependent rearrangement and reduction of 1-deoxy-D-xylulose-5-phosphate (DXP) to 2-C-methyl-D-erythritol 4-phosphate (MEP). The protein is 1-deoxy-D-xylulose 5-phosphate reductoisomerase of Pseudomonas paraeruginosa (strain DSM 24068 / PA7) (Pseudomonas aeruginosa (strain PA7)).